A 534-amino-acid chain; its full sequence is UDP-glucuronosyltransferase 1A4 (534 aa).

Residues 1-28 (MARGLQVPLPRLATGLLLLLSVQPWAES) form the signal peptide. Residues asparagine 119, asparagine 142, asparagine 296, and asparagine 348 are each glycosylated (N-linked (GlcNAc...) asparagine). The helical transmembrane segment at 492–508 (VIGFLLAVVLTVAFITF) threads the bilayer.

Belongs to the UDP-glycosyltransferase family. Homodimer. Homooligomer. Interacts with UGT1A1, UGT1A3, UGT1A6, UGT1A7, UGT1A8, UGT1A9 and UGT1A10 to form heterodimers. Isoform 1 interacts with isoform 2/i2 suggesting that oligomerization is involved in negative regulation of transferase activity by isoform 2. Isoform 1 also interacts with respective i2 isoforms of UGT1A1, UGT1A3, UGT1A6, UGT1A7, UGT1A8, UGT1A9 and UGT1A10. In terms of tissue distribution, expressed in liver. Expressed in kidney, colon and small intestine. Not expressed in esophagus. Not expressed in skin. Expressed in liver, kidney, colon, esophagus and small intestine.

The protein localises to the endoplasmic reticulum membrane. The catalysed reaction is glucuronate acceptor + UDP-alpha-D-glucuronate = acceptor beta-D-glucuronoside + UDP + H(+). It carries out the reaction calcidiol + UDP-alpha-D-glucuronate = calcidiol 25-O-(beta-D-glucuronide) + UDP + H(+). It catalyses the reaction calcidiol + UDP-alpha-D-glucuronate = calcidiol 3-O-(beta-D-glucuronide) + UDP + H(+). The enzyme catalyses calcitriol + UDP-alpha-D-glucuronate = calcitriol 25-O-(beta-D-glucuronide) + UDP + H(+). The catalysed reaction is (5Z,8Z,11Z,14Z)-eicosatetraenoate + UDP-alpha-D-glucuronate = O-[(5Z),(8Z),(11Z),(14Z)-eicosatetraenoyl]-beta-D-glucuronate + UDP. It carries out the reaction 15-hydroxy-(5Z,8Z,11Z,13E)-eicosatetraenoate + UDP-alpha-D-glucuronate = 15-O-(beta-D-glucuronosyl)-(5Z,8Z,11Z,14Z)-eicosatetraenoate + UDP + H(+). It catalyses the reaction 20-hydroxy-(5Z,8Z,11Z,14Z)-eicosatetraenoate + UDP-alpha-D-glucuronate = 20-O-(beta-D-glucuronosyl)-(5Z,8Z,11Z,14Z)-eicosatetraenoate + UDP + H(+). UDP-glucuronosyltransferase (UGT) that catalyzes phase II biotransformation reactions in which lipophilic substrates are conjugated with glucuronic acid to increase the metabolite's water solubility, thereby facilitating excretion into either the urine or bile. Essential for the elimination and detoxification of drugs, xenobiotics and endogenous compounds. Involved in the glucuronidation of calcidiol, which is the major circulating form of vitamin D3 essential for the regulation of calcium and phosphate homeostasis. Also glucuronidates the biologically active form of vitamin D3, calcitriol, probably leading to its biliary transport and intestinal reabsorption. Involved in the glucuronidation of arachidonic acid (AA) and AA-derived eicosanoids including 15-HETE, 20-HETE and PGB1. Its function is as follows. Lacks UDP-glucuronosyltransferase (UGT) activity but acts as a negative regulator of isoform 1. The sequence is that of UDP-glucuronosyltransferase 1A4 from Homo sapiens (Human).